A 395-amino-acid polypeptide reads, in one-letter code: MISLRSISRSPAVQPARIYRTLATADTSGINEQAKPKTKRKKTVFSDSLNKGPSFEDFVNGKAADMLVDPLEAARQDPNQRLPKWLKVPIPKGKSFNNLKNDVRELKLATVCEEAKCPNIGECWGGKKSEATATIMLMGDTCTRGCRFCSVKTSRAPAKPDPMEPENTAEAISRWGLGYVVLTTVDRDDLVDGGANHLAETVRKIKEKAPQILVEVLGGDFRGDLDMAAILARSGLDVYAHNIETVEALTPYVRDRRATYRQSLSILNKAKETKPSLVTKTSLMLGFGETDEQIMQTLKDLREIKCDVVTFGQYMRPTKRHMKVVDYVKPEKFDYWRDTALQMGFLYVASGPLVRSSYKAGEAFIENVIRKRRHNVGETPRLAQEVNPKIISQSI.

The N-terminal 14 residues, Met-1–Gln-14, are a transit peptide targeting the mitochondrion. Cys-112, Cys-117, Cys-123, Cys-142, Cys-146, Cys-149, and Ser-357 together coordinate [4Fe-4S] cluster. One can recognise a Radical SAM core domain in the interval Lys-127–Leu-346.

This sequence belongs to the radical SAM superfamily. Lipoyl synthase family. [4Fe-4S] cluster serves as cofactor.

The protein resides in the mitochondrion. The catalysed reaction is [[Fe-S] cluster scaffold protein carrying a second [4Fe-4S](2+) cluster] + N(6)-octanoyl-L-lysyl-[protein] + 2 oxidized [2Fe-2S]-[ferredoxin] + 2 S-adenosyl-L-methionine + 4 H(+) = [[Fe-S] cluster scaffold protein] + N(6)-[(R)-dihydrolipoyl]-L-lysyl-[protein] + 4 Fe(3+) + 2 hydrogen sulfide + 2 5'-deoxyadenosine + 2 L-methionine + 2 reduced [2Fe-2S]-[ferredoxin]. The protein operates within protein modification; protein lipoylation via endogenous pathway; protein N(6)-(lipoyl)lysine from octanoyl-[acyl-carrier-protein]: step 2/2. Functionally, catalyzes the radical-mediated insertion of two sulfur atoms into the C-6 and C-8 positions of the octanoyl moiety bound to the lipoyl domains of lipoate-dependent enzymes, thereby converting the octanoylated domains into lipoylated derivatives. This chain is Lipoyl synthase, mitochondrial, found in Debaryomyces hansenii (strain ATCC 36239 / CBS 767 / BCRC 21394 / JCM 1990 / NBRC 0083 / IGC 2968) (Yeast).